A 391-amino-acid polypeptide reads, in one-letter code: Alanine racemase (391 aa).

The active-site Proton acceptor; specific for D-alanine is Lys46. An N6-(pyridoxal phosphate)lysine modification is found at Lys46. Arg148 is a binding site for substrate. The Proton acceptor; specific for L-alanine role is filled by Tyr283. Met331 contributes to the substrate binding site.

It belongs to the alanine racemase family. Requires pyridoxal 5'-phosphate as cofactor.

The enzyme catalyses L-alanine = D-alanine. Its pathway is amino-acid biosynthesis; D-alanine biosynthesis; D-alanine from L-alanine: step 1/1. In terms of biological role, catalyzes the interconversion of L-alanine and D-alanine. May also act on other amino acids. In Streptomyces coelicolor (strain ATCC BAA-471 / A3(2) / M145), this protein is Alanine racemase (alr).